The primary structure comprises 289 residues: 4-diphosphocytidyl-2-C-methyl-D-erythritol kinase (289 aa).

Residue Lys-10 is part of the active site. 94-104 (PVAAGLAGGSS) provides a ligand contact to ATP. Asp-136 is a catalytic residue.

It belongs to the GHMP kinase family. IspE subfamily.

It catalyses the reaction 4-CDP-2-C-methyl-D-erythritol + ATP = 4-CDP-2-C-methyl-D-erythritol 2-phosphate + ADP + H(+). It functions in the pathway isoprenoid biosynthesis; isopentenyl diphosphate biosynthesis via DXP pathway; isopentenyl diphosphate from 1-deoxy-D-xylulose 5-phosphate: step 3/6. Catalyzes the phosphorylation of the position 2 hydroxy group of 4-diphosphocytidyl-2C-methyl-D-erythritol. This chain is 4-diphosphocytidyl-2-C-methyl-D-erythritol kinase, found in Bacillus cereus (strain G9842).